The following is a 268-amino-acid chain: Myeloid leukemia factor 1 (268 aa).

3 positions are modified to phosphoserine: serine 8, serine 32, and serine 34. Disordered regions lie at residues 44-66 (ISDG…SLTH) and 209-268 (GRHN…SNKK). The interaction with COPS3 stretch occupies residues 50 to 125 (RAHNRRGHND…IGDEPPKVFQ (76 aa)). Composition is skewed to basic and acidic residues over residues 56–65 (GHNDGEDSLT) and 226–237 (PGSRELKRREKP).

The protein belongs to the MLF family. Interacts with CENPU. Also interacts with NRBP1/MADM, YWHAZ/14-3-3-zeta and HNRPUL2/MANP. NRBP1 recruits a serine kinase which phosphorylates both itself and MLF1. Phosphorylated MLF1 then binds to YWHAZ and is retained in the cytoplasm. Retained in the nucleus by binding to HNRPUL2. Binds to COPS3/CSN3 which is required for suppression of COP1 and activation of p53. Phosphorylation is required for binding to YWHAZ. As to expression, most abundant in testis, ovary, skeletal muscle, heart, kidney and colon. Low expression in spleen, thymus and peripheral blood leukocytes.

The protein localises to the cytoplasm. The protein resides in the nucleus. It localises to the cell projection. Its subcellular location is the cilium. It is found in the cytoskeleton. The protein localises to the cilium basal body. In terms of biological role, involved in lineage commitment of primary hemopoietic progenitors by restricting erythroid formation and enhancing myeloid formation. Interferes with erythropoietin-induced erythroid terminal differentiation by preventing cells from exiting the cell cycle through suppression of CDKN1B/p27Kip1 levels. Suppresses COP1 activity via CSN3 which activates p53 and induces cell cycle arrest. Binds DNA and affects the expression of a number of genes so may function as a transcription factor in the nucleus. The protein is Myeloid leukemia factor 1 (MLF1) of Homo sapiens (Human).